A 1758-amino-acid chain; its full sequence is Collagen alpha-2(IV) chain (1758 aa).

A signal peptide spans 1 to 26; sequence MKQRAALGPVLRLAILALLAVSYVQS. Residues 27 to 42 form a 7S domain region; it reads QATCRDCSNRGCFCVG. Positions 42–1527 are triple-helical region; that stretch reads GEKGSMGAPG…PGAPGAAGPA (1486 aa). Over residues 47–62 the composition is skewed to low complexity; it reads MGAPGPQGPPGTQGIR. Disordered stretches follow at residues 47–943, 955–1304, 1316–1339, and 1367–1525; these read MGAP…GAPG, GVPG…GLPG, GFPG…DGLP, and GFPG…GAAG. The span at 102-111 shows a compositional bias: gly residues; sequence GNDGGNGRPG. The span at 134 to 149 shows a compositional bias: pro residues; it reads PGRPGPPGMPGFPGPP. Residues 189–198 show a composition bias toward basic and acidic residues; that stretch reads YPGEKGDRGD. The span at 224–234 shows a compositional bias: low complexity; sequence PKGDPGDLGSV. Residue S248 is glycosylated (O-linked (Xyl...) (glycosaminoglycan) serine). A compositionally biased stretch (basic and acidic residues) spans 258–267; it reads PGEKGDKGEP. Residues 268-283 show a composition bias toward gly residues; sequence GEGGQRGYPGNGGLSG. A compositionally biased stretch (pro residues) spans 367–382; that stretch reads PGPPGLPGRPGNPGPP. Residues 398–407 show a composition bias toward gly residues; the sequence is GNTGGPGLPG. Composition is skewed to low complexity over residues 408 to 417 and 429 to 439; these read YPGNEGLPGP and APGVSGPSGIP. The span at 464–479 shows a compositional bias: basic and acidic residues; it reads KDGKPGLDGAPGRKGE. 2 stretches are compositionally biased toward low complexity: residues 495 to 509 and 568 to 584; these read GLPG…PGPN and PVGD…AGRP. The segment covering 638 to 648 has biased composition (pro residues); it reads PSGPVGPPGAP. Composition is skewed to gly residues over residues 693-702, 737-746, and 782-791; these read GAKGDGGLPG, GTKGEGGYPG, and GDKGFGGVPG. Low complexity predominate over residues 839-858; the sequence is LPGLPGTPGLEGQRGFPGAP. The span at 859–868 shows a compositional bias: gly residues; that stretch reads GLKGGDGLPG. Over residues 929-938 the composition is skewed to low complexity; the sequence is APGQSGAPGL. A compositionally biased stretch (gly residues) spans 958–967; sequence GFKGDGGLPG. Residues 968–980 show a composition bias toward low complexity; the sequence is LPGLNGPKGEPGV. Positions 988–997 are enriched in gly residues; the sequence is GMKGNGGLPG. Residues 1040 to 1056 show a composition bias toward low complexity; it reads LPGQPGLRGPQGPSGLP. Over residues 1194 to 1203 the composition is skewed to gly residues; sequence GLPGLGGEKG. Low complexity predominate over residues 1237 to 1250; that stretch reads FPGQPGQEGLPGLS. Gly residues predominate over residues 1251–1260; the sequence is GEKGMGGLPG. Residues 1373 to 1382 are compositionally biased toward gly residues; that stretch reads GLKGEGGLPG. Composition is skewed to low complexity over residues 1413-1425 and 1433-1454; these read LPGR…ADGP and GPQN…APGL. Composition is skewed to gly residues over residues 1492–1501 and 1507–1516; these read GEKGMGGLPG and GQPGGPGAPG. The region spanning 1531–1754 is the Collagen IV NC1 domain; the sequence is GFVLVKHSQT…SRCQVCVKST (224 aa). Disulfide bonds link C1546–C1635, C1579–C1632, C1591–C1597, C1654–C1750, C1688–C1747, and C1700–C1707.

This sequence belongs to the type IV collagen family. As to quaternary structure, trimers of two alpha 1(IV) and one alpha 2(IV) chain. Type IV collagen forms a mesh-like network linked through intermolecular interactions between 7S domains and between NC1 domains. Post-translationally, prolines at the third position of the tripeptide repeating unit (G-X-Y) are hydroxylated in some or all of the chains. Type IV collagens contain numerous cysteine residues which are involved in inter- and intramolecular disulfide bonding. 12 of these, located in the NC1 domain, are conserved in all known type IV collagens. In terms of processing, the trimeric structure of the NC1 domains is stabilized by covalent bonds between Lys and Met residues. Localizes to the basement membrane between distal tip cells and the germline. Localizes to the intestinal basement membrane.

Its subcellular location is the secreted. The protein resides in the extracellular space. The protein localises to the extracellular matrix. It localises to the basement membrane. Functionally, collagen type IV is specific for basement membranes. Together with fbl-1 and downstream of metalloprotease mig-17, recruits nidogen nid-1 to the gonad basement membrane thereby probably inducing basement membrane remodeling required for the directional migration of distal tip cells. Required to restrict presynaptic growth at the neuromuscular junctions in late larval stage and in adult motor neurons. Vital for embryonic development. This chain is Collagen alpha-2(IV) chain, found in Caenorhabditis elegans.